The chain runs to 236 residues: E3 ubiquitin-protein ligase RNF187 (236 aa).

The segment at 12 to 53 (CALCQRAPREPVRADCGHRFCRACVVRFWAEEDGPFPCPECA) adopts an RING-type zinc-finger fold. R98 and R109 each carry asymmetric dimethylarginine; by PRMT1. A Glycyl lysine isopeptide (Lys-Gly) (interchain with G-Cter in ubiquitin) cross-link involves residue K195. The residue at position 200 (S200) is a Phosphoserine. Glycyl lysine isopeptide (Lys-Gly) (interchain with G-Cter in ubiquitin) cross-links involve residues K224 and K225.

As to quaternary structure, homodimer. Interacts with JUN, independently of JUN phosphorylation. Interacts (via C-terminus) with TRIM7. Ubiquitinated; undergoes 'Lys-48'-linked autoubiquitination in the absence of growth factors and MAP3K1-induced 'Lys-63'-linked polyubiquitination. 'Lys-48'-autoubiquitination leads to degradation by the proteasome, while MAP3K1-induced 'Lys-63'-linked polyubiquitination results in the stabilization of the protein. 'Lys-48'- and 'Lys-63'-linked polyubiquitinations occur most probably on the same 3 C-terminal lysine residues (Lys-195, Lys-224 and Lys-225) and are thus mutually exclusive. Other sites of ubiquitination are not excluded. 'Lys-63'-linked polyubiquitination by TRIM7 in response to growth factor signaling via the MEK/ERK pathway enhances protein stability. Post-translationally, arginine methylation by PRMT1 stabilizes RNF187 by facilitating K63-linked ubiquitin chain formation, and enables dimerization, c-Jun interaction and subsequent AP1 target gene expression.

It localises to the cytoplasm. The protein resides in the nucleus. It carries out the reaction S-ubiquitinyl-[E2 ubiquitin-conjugating enzyme]-L-cysteine + [acceptor protein]-L-lysine = [E2 ubiquitin-conjugating enzyme]-L-cysteine + N(6)-ubiquitinyl-[acceptor protein]-L-lysine.. It participates in protein modification; protein ubiquitination. Functionally, E3 ubiquitin-protein ligase that acts as a coactivator of JUN-mediated gene activation in response to growth factor signaling via the MAP3K1 pathway, independently from MAPK8. The protein is E3 ubiquitin-protein ligase RNF187 (Rnf187) of Mus musculus (Mouse).